A 377-amino-acid chain; its full sequence is D-alanine--D-alanine ligase (377 aa).

Positions 140-349 (KELLTVNGIR…NAKLVDMLID (210 aa)) constitute an ATP-grasp domain. 170 to 225 (VAELGNIVFVKAANQGSSVGISRVTNAEEYTEALSDSFQYDYKVLIEEAVNGAREL) is a binding site for ATP. Mg(2+) is bound by residues D303, E316, and N318.

It belongs to the D-alanine--D-alanine ligase family. It depends on Mg(2+) as a cofactor. Requires Mn(2+) as cofactor.

It localises to the cytoplasm. The catalysed reaction is 2 D-alanine + ATP = D-alanyl-D-alanine + ADP + phosphate + H(+). It functions in the pathway cell wall biogenesis; peptidoglycan biosynthesis. In terms of biological role, cell wall formation. This chain is D-alanine--D-alanine ligase, found in Leuconostoc mesenteroides subsp. mesenteroides (strain ATCC 8293 / DSM 20343 / BCRC 11652 / CCM 1803 / JCM 6124 / NCDO 523 / NBRC 100496 / NCIMB 8023 / NCTC 12954 / NRRL B-1118 / 37Y).